Consider the following 304-residue polypeptide: Non-structural maintenance of chromosomes element 3 homolog (304 aa).

Disordered regions lie at residues 1 to 82 (MLQK…PRSQ) and 285 to 304 (ALAD…APSS). Residues 32–43 (AGEDARVLRDGF) are compositionally biased toward basic and acidic residues. 3 positions are modified to phosphoserine: S57, S60, and S64. Over residues 60–80 (SQGPSPQGARRAQAAPAVGPR) the composition is skewed to low complexity. The segment at 78–304 (GPRSQKQLEL…PQPSGPAPSS (227 aa)) is interaction with NSMCE1. The MAGE domain maps to 85 to 285 (LELKVSELVQ…KDWPAQYCEA (201 aa)).

Component of the SMC5-SMC6 complex which consists at least of SMC5, SMC6, NSMCE2, NSMCE1, NSMCE4A or EID3 and NSMCE3. NSMCE1, NSMCE4A or EID3 and NSMCE3 probably form a subcomplex that bridges the head domains of the SMC5:SMC6 heterodimer. Interacts with PJA1. Interacts with E2F1 (via C-terminus). Interacts with NGFR (via C-terminus). Interacts with NSMCE1. Interacts with NSMCE4. Interacts with SMC6. Interacts with EID3. Ubiquitous.

The protein localises to the cytoplasm. The protein resides in the nucleus. Its subcellular location is the chromosome. It is found in the telomere. Functionally, component of the SMC5-SMC6 complex, a complex involved in repair of DNA double-strand breaks by homologous recombination. The complex may promote sister chromatid homologous recombination by recruiting the SMC1-SMC3 cohesin complex to double-strand breaks. The complex is required for telomere maintenance via recombination in ALT (alternative lengthening of telomeres) cell lines and mediates sumoylation of shelterin complex (telosome) components which is proposed to lead to shelterin complex disassembly in ALT-associated PML bodies (APBs). In vitro enhances ubiquitin ligase activity of NSMCE1. Proposed to act through recruitment and/or stabilization of the Ubl-conjugating enzyme (E2) at the E3:substrate complex. May be a growth suppressor that facilitates the entry of the cell into cell cycle arrest. This Homo sapiens (Human) protein is Non-structural maintenance of chromosomes element 3 homolog.